The primary structure comprises 143 residues: Hemoglobin subunit alpha-2 (143 aa).

Residue Ser-2 is modified to N-acetylserine. The Globin domain occupies 2–143 (SLSSKQKATV…LALALAEKYR (142 aa)). His-60 lines the O2 pocket. His-89 contacts heme b.

This sequence belongs to the globin family. In terms of assembly, hb 2 is a heterotetramer of two alpha-2 and two beta-2 chains. Red blood cells.

In terms of biological role, involved in oxygen transport from gills to the various peripheral tissues. In Gadus morhua (Atlantic cod), this protein is Hemoglobin subunit alpha-2 (hba2).